The sequence spans 1082 residues: MDYDTLASKYLKFVYDFEDVTYQNNYFVTDEYKSDLEQYLKSIHDGEKISQSKIDSMETALLTKVPKEKRCLISKLVFAYGKHGNVENKLLKYGTKDALTHAIQKDVKPYENNIITSEIFKDESEYTDTYMDPAINTSCQSNCQAMMFTISEMKLTDIKNATRLEKLFTIVAATINKYGMPRHNIRYRYEWETMKDKPYHLAAWINSSIEMIACVVDHHTYMIARELIVKSFTNRTSLAKLVSSPMTVLTAMLPIRGTVITTENLELEYSSKSVNYLISEEMAEDFMKAIEQLRDEGLEIYQDYYEKWFKSPDPLTFPNIALIYSFSFHVGYRKQALSDAVYDQITVTYDDNVNMEMYKEYSERIENEIFTILKDKVVHEDKRLEEYELSALLSMSSASNGVLREIDFGGQKVRSTKKNMHVIDDMYHKRYTTDIPPVDERNPIPLGRRDVPGRRTRAIFILPYQYFIAQHSFAEMMLKYAKREREYSEFYSQANQVLSYGDVTRYLDSNSILCFTDVSQWDASQHNTRVLRRSIIRAMERLKQLTHNTNIHKAIDIYIQSQKNLENSYVLIDKKAIQYGATASGEKQTKIMNSIANKALIQTVLGKLMTDYTFDVKMIRVDGDDNYAIVRFPTAITEKLLSEFTSKLRSYYSEMNVKVKALASLTGCEIAKRYIAGGMLFFRAGVNILNHEKRNQDSAYDMAATLYANYIVNALRGLTMSRTFILVKICQMTSIKITGTLRLFPMKSILALNSTFKVFDEVDYVINYPISELFIQLQRKLSSIKAKSKIADNIAKSPQFKSYVEFLNKSLTADENPIVSDGIKLTEKAKLNSYAPIALEKRRDQFNMMVSFLQNPTTFKSETVVTINDVLYFISGFIKINSSVALPKEENNTMPLLPVTIKRTLNYFGLRTHDYDIKGSSSTMSKIIKQYSVYTPGIEELYEVVNKSIDSIRGYFASFNVPKADVDTYISTQMYKHDRFKILQAYIYNLLSVNYGMYQLVDLNSAKFFDHVIHTPMAKTPTAVFMIDLALRLKVINHCIEKGEVITVSVHANKTDYLKLWRMLWNVKTMNSPYSKNSMFDE.

The region spanning 498-670 (LSYGDVTRYL…ALASLTGCEI (173 aa)) is the RdRp catalytic domain.

It belongs to the reoviridae RNA-directed RNA polymerase family. In terms of assembly, interacts with VP3 (Potential). Interacts with VP2; this interaction activates VP1. Interacts with NSP5; this interaction is probably necessary for the formation of functional virus factories. Interacts with NSP2; this interaction is weak. The cofactor is Mg(2+).

It is found in the virion. The catalysed reaction is RNA(n) + a ribonucleoside 5'-triphosphate = RNA(n+1) + diphosphate. Functionally, RNA-directed RNA polymerase that is involved in both transcription and genome replication. Together with VP3 capping enzyme, forms an enzyme complex positioned near the channels situated at each of the five-fold vertices of the core. Following infection, the outermost layer of the virus is lost, leaving a double-layered particle (DLP) made up of the core and VP6 shell. VP1 then catalyzes the transcription of fully conservative plus-strand genomic RNAs that are extruded through the DLP's channels into the cytoplasm where they function as mRNAs for translation of viral proteins. One copy of each of the viral (+)RNAs is also recruited during core assembly, together with newly synthesized polymerase complexes and VP2. The polymerase of these novo-formed particles catalyzes the synthesis of complementary minus-strands leading to dsDNA formation. To do so, the polymerase specifically recognizes conserved 3' sequence(s) in plus-strand RNA templates. Once dsRNA synthesis is complete, the polymerase switches to the transcriptional mode, thus providing secondary transcription. The sequence is that of RNA-directed RNA polymerase from Rotavirus C (strain RVC/Pig/United States/Cowden/1980) (RV-C).